We begin with the raw amino-acid sequence, 1072 residues long: DNA-directed RNA polymerase subunit beta (1072 aa).

Belongs to the RNA polymerase beta chain family. In plastids the minimal PEP RNA polymerase catalytic core is composed of four subunits: alpha, beta, beta', and beta''. When a (nuclear-encoded) sigma factor is associated with the core the holoenzyme is formed, which can initiate transcription.

Its subcellular location is the plastid. The protein localises to the chloroplast. The catalysed reaction is RNA(n) + a ribonucleoside 5'-triphosphate = RNA(n+1) + diphosphate. Functionally, DNA-dependent RNA polymerase catalyzes the transcription of DNA into RNA using the four ribonucleoside triphosphates as substrates. The sequence is that of DNA-directed RNA polymerase subunit beta from Lepidium virginicum (Virginia pepperweed).